Here is a 793-residue protein sequence, read N- to C-terminus: Short transient receptor potential channel 1 (793 aa).

Residues 1–30 (MMAALYPSTDLSGASSSSLPSSPSSSSPNE) are disordered. Over 1 to 345 (MMAALYPSTD…FGQMSGYRRK (345 aa)) the chain is Cytoplasmic. Residues 15-28 (SSSSLPSSPSSSSP) show a composition bias toward low complexity. ANK repeat units follow at residues 46 to 75 (LNEK…SGDL), 83 to 109 (LGRN…YGCQ), 111 to 156 (ADAL…EYST), and 158 to 180 (MDVA…MLLK). His-189, Cys-193, Cys-195, and Cys-198 together coordinate Zn(2+). An intramembrane region (discontinuously helical) is located at residues 346–379 (PTCKKIMTVLTVGIFWPVLSLCYLIAPKSQFGRI). At 380–386 (IHTPFMK) the chain is on the cytoplasmic side. The helical transmembrane segment at 387 to 404 (FIIHGASYFTFLLLLNLY) threads the bilayer. Residues 405–422 (SLVYHEDKKNTMGPALER) lie on the Extracellular side of the membrane. The chain crosses the membrane as a helical span at residues 423-439 (IDYLLILWIIGMIWSDI). The Cytoplasmic segment spans residues 440–455 (KRLWYEGLEDFLEESR). Residues 456–475 (NQLSFVMNSLYLATFALKEE) form a helical membrane-spanning segment. Over 476-496 (AHNKFHDFADRKDWDAFHPTL) the chain is Extracellular. A helical transmembrane segment spans residues 497 to 517 (VAEGLFAFANVLSYLRLFFYV). Residues 518-536 (YTSSILGPLQISMGRMLQD) lie on the Cytoplasmic side of the membrane. A helical transmembrane segment spans residues 537–558 (FGKFLGMFLLVLFSFTIGLTQL). Over 559 to 623 (YDKGYTPKEQ…GEELQSFVGA (65 aa)) the chain is Extracellular. A disulfide bond links Cys-571 and Cys-576. A helical transmembrane segment spans residues 624 to 644 (FIVGTYNVVVVIVLTKLLVAM). Topologically, residues 645 to 793 (LHKSFQLIAN…SKYAMFYPRN (149 aa)) are cytoplasmic.

Belongs to the transient receptor (TC 1.A.4) family. STrpC subfamily. TRPC1 sub-subfamily. As to quaternary structure, heterotetramer with TRPC4 and/or TRPC5. Forms a heteromeric ion channel with TRPC4, with a 1:3 TRPC1:TRPC4 stoichiometry. Unlike other TRP channel proteins, does not form a homomeric channel. Interacts with TRPC4AP. Interacts with ITPR3. Interacts with MX1 and RNF24. Interacts with FKBP4. Interacts with PLSCR1. Interacts with PKD2L2. Forms a heterotetramer with PKD2 with a 2:2 stoichiometry; has distinct channel properties separate from PKD2 or TRPC1 homomers alone. Activation of PRKCA induces phosphorylation of TRPC1 and subsequent Ca2+ entry into cells.

The protein localises to the cell membrane. It catalyses the reaction Ca(2+)(in) = Ca(2+)(out). It carries out the reaction Na(+)(in) = Na(+)(out). The enzyme catalyses Li(+)(in) = Li(+)(out). The catalysed reaction is Cs(+)(in) = Cs(+)(out). With respect to regulation, may be operated by a phosphatidylinositol second messenger system activated by receptor tyrosine kinases or G-protein coupled receptors. Also activated by intracellular calcium store depletion. Functionally, forms a receptor-activated non-selective calcium permeant cation channel. Forms a heteromeric ion channel with TRPC4 or TRPC5 that has reduced calcium permeability compared to the homomeric TRPC4 or TRPC5 channel. Also permeable to monovalent ions including sodium, lithium and cesium ions. In Bos taurus (Bovine), this protein is Short transient receptor potential channel 1 (TRPC1).